Reading from the N-terminus, the 468-residue chain is Methionine aminopeptidase 2 (468 aa).

Basic and acidic residues predominate over residues 63 to 74; that stretch reads AAKEATKKDAKG. A disordered region spans residues 63-87; that stretch reads AAKEATKKDAKGGKGKANGSAAATA. Residue His219 participates in substrate binding. A divalent metal cation is bound by residues Asp239, Asp250, and His319. His327 contributes to the substrate binding site. Residues Glu352 and Glu449 each contribute to the a divalent metal cation site.

This sequence belongs to the peptidase M24A family. Methionine aminopeptidase eukaryotic type 2 subfamily. It depends on Co(2+) as a cofactor. Zn(2+) is required as a cofactor. Requires Mn(2+) as cofactor. Fe(2+) serves as cofactor.

It localises to the cytoplasm. It carries out the reaction Release of N-terminal amino acids, preferentially methionine, from peptides and arylamides.. With respect to regulation, inhibited by the fumagillin analog, TNP-470. In terms of biological role, cotranslationally removes the N-terminal methionine from nascent proteins. The N-terminal methionine is often cleaved when the second residue in the primary sequence is small and uncharged (Met-Ala-, Cys, Gly, Pro, Ser, Thr, or Val). Required for germ cell proliferation and/or differentiation. This is Methionine aminopeptidase 2 from Caenorhabditis elegans.